Reading from the N-terminus, the 452-residue chain is Adenosylmethionine-8-amino-7-oxononanoate aminotransferase (452 aa).

Residue Gly116–Ser117 coordinates pyridoxal 5'-phosphate. Tyr152 contacts substrate. Asp257 provides a ligand contact to pyridoxal 5'-phosphate. Positions 286, 321, and 414 each coordinate substrate. The residue at position 286 (Lys286) is an N6-(pyridoxal phosphate)lysine.

It belongs to the class-III pyridoxal-phosphate-dependent aminotransferase family. BioA subfamily. Homodimer. Requires pyridoxal 5'-phosphate as cofactor.

Its subcellular location is the cytoplasm. It catalyses the reaction (8S)-8-amino-7-oxononanoate + S-adenosyl-L-methionine = S-adenosyl-4-methylsulfanyl-2-oxobutanoate + (7R,8S)-7,8-diammoniononanoate. It functions in the pathway cofactor biosynthesis; biotin biosynthesis; 7,8-diaminononanoate from 8-amino-7-oxononanoate (SAM route): step 1/1. In terms of biological role, catalyzes the transfer of the alpha-amino group from S-adenosyl-L-methionine (SAM) to 7-keto-8-aminopelargonic acid (KAPA) to form 7,8-diaminopelargonic acid (DAPA). It is the only aminotransferase known to utilize SAM as an amino donor. This is Adenosylmethionine-8-amino-7-oxononanoate aminotransferase from Staphylococcus aureus (strain NCTC 8325 / PS 47).